The primary structure comprises 400 residues: Argininosuccinate synthase (400 aa).

ATP is bound by residues 10–18 (AYSGGVDTS) and Ala-38. Tyr-89 contributes to the L-citrulline binding site. Residue Gly-119 participates in ATP binding. Residues Thr-121, Asn-125, and Asp-126 each coordinate L-aspartate. Asn-125 lines the L-citrulline pocket. 5 residues coordinate L-citrulline: Arg-129, Ser-177, Ser-186, Glu-262, and Tyr-274.

The protein belongs to the argininosuccinate synthase family. Type 1 subfamily. In terms of assembly, homotetramer.

The protein localises to the cytoplasm. The catalysed reaction is L-citrulline + L-aspartate + ATP = 2-(N(omega)-L-arginino)succinate + AMP + diphosphate + H(+). It functions in the pathway amino-acid biosynthesis; L-arginine biosynthesis; L-arginine from L-ornithine and carbamoyl phosphate: step 2/3. This Synechococcus elongatus (strain ATCC 33912 / PCC 7942 / FACHB-805) (Anacystis nidulans R2) protein is Argininosuccinate synthase.